Consider the following 304-residue polypeptide: MSASTAAPARDRLRIAIQKSGRLAEPARSLLAACGLSWRQSRDKLFCYGESLPVDLLLVRDDDIPGLIADGVCDLGIVGQNELEEQAAERRGNGLPAAYHAVRGVGFGQCRLMLAVPEEWDWQGVAQLAGKRIATSYPAILADWLERQGIEATVVELSGSVEIAPRLGTADLICDLVSSGATLAANQLKPVELVMESEAVLAGAVREPADARAGLLAMLLRRMDGVLKLRDSKLLMFRADQDNVDALRRLLPDADPLVQLPDDGNGVLRLQTMCHGAVTWQRLEELERAGAQGLMVLTVERSLA.

The protein belongs to the ATP phosphoribosyltransferase family. Long subfamily. Mg(2+) is required as a cofactor.

It localises to the cytoplasm. The catalysed reaction is 1-(5-phospho-beta-D-ribosyl)-ATP + diphosphate = 5-phospho-alpha-D-ribose 1-diphosphate + ATP. The protein operates within amino-acid biosynthesis; L-histidine biosynthesis; L-histidine from 5-phospho-alpha-D-ribose 1-diphosphate: step 1/9. Its activity is regulated as follows. Feedback inhibited by histidine. In terms of biological role, catalyzes the condensation of ATP and 5-phosphoribose 1-diphosphate to form N'-(5'-phosphoribosyl)-ATP (PR-ATP). Has a crucial role in the pathway because the rate of histidine biosynthesis seems to be controlled primarily by regulation of HisG enzymatic activity. This Xanthomonas oryzae pv. oryzae (strain MAFF 311018) protein is ATP phosphoribosyltransferase.